The primary structure comprises 263 residues: Type III pantothenate kinase (263 aa).

Position 6–13 (6–13 (DVGNTRIK)) interacts with ATP. Substrate-binding positions include Tyr92 and 99–102 (GTDR). Residue Asp101 is the Proton acceptor of the active site. An ATP-binding site is contributed by Thr124. Thr174 is a binding site for substrate.

The protein belongs to the type III pantothenate kinase family. As to quaternary structure, homodimer. NH4(+) is required as a cofactor. The cofactor is K(+).

It is found in the cytoplasm. It catalyses the reaction (R)-pantothenate + ATP = (R)-4'-phosphopantothenate + ADP + H(+). It functions in the pathway cofactor biosynthesis; coenzyme A biosynthesis; CoA from (R)-pantothenate: step 1/5. Catalyzes the phosphorylation of pantothenate (Pan), the first step in CoA biosynthesis. The protein is Type III pantothenate kinase of Azoarcus sp. (strain BH72).